Consider the following 337-residue polypeptide: MTCTIVVGGQWGDEGKGKIISYLCKKDNPSIIARGGVGPNAGHTVEVDGEKYGIRMVPTGFPNVNAKLAVGAGVLTDPEVLLKEIQMLEKFNVGERMLVDYRCGIIEETHKELDKSNEHLSKEIGSTGTGCGPANVDRAMRTLKQGKDIESISKYMGDVSKAVNEALEAGDNVLIEGTQGSLLSLFYGSYPYVTSKDTNAASFAADVGVGPTKIDEVVAVFKSYPTRVGEGPFPTEMSVEEAESLGVVEYGTVTGRRRRVGYFDHELAKKVCRLNGATQIAITCLDKYDTECYGITEYEKLSEKGKAFIKEVEEKVGVKVTLISTGPELGQTIDVRK.

Residues 12–18 (GDEGKGK) and 42–44 (GHT) each bind GTP. Aspartate 13 acts as the Proton acceptor in catalysis. Mg(2+) is bound by residues aspartate 13 and glycine 42. IMP-binding positions include 13–16 (DEGK), 40–43 (NAGH), threonine 127, arginine 141, glutamine 179, threonine 194, and arginine 256. Histidine 43 (proton donor) is an active-site residue. Substrate is bound at residue 252–258 (TVTGRRR). Residues arginine 258, 284–286 (CLD), and 324–326 (STG) contribute to the GTP site.

Belongs to the adenylosuccinate synthetase family. Homodimer. Requires Mg(2+) as cofactor.

It is found in the cytoplasm. The catalysed reaction is IMP + L-aspartate + GTP = N(6)-(1,2-dicarboxyethyl)-AMP + GDP + phosphate + 2 H(+). Its pathway is purine metabolism; AMP biosynthesis via de novo pathway; AMP from IMP: step 1/2. Plays an important role in the de novo pathway of purine nucleotide biosynthesis. Catalyzes the first committed step in the biosynthesis of AMP from IMP. The protein is Adenylosuccinate synthetase of Methanococcus maripaludis (strain C6 / ATCC BAA-1332).